The following is a 302-amino-acid chain: Glycine--tRNA ligase alpha subunit (302 aa).

The protein belongs to the class-II aminoacyl-tRNA synthetase family. Tetramer of two alpha and two beta subunits.

It is found in the cytoplasm. The enzyme catalyses tRNA(Gly) + glycine + ATP = glycyl-tRNA(Gly) + AMP + diphosphate. This chain is Glycine--tRNA ligase alpha subunit, found in Xanthomonas campestris pv. campestris (strain 8004).